A 61-amino-acid chain; its full sequence is Large ribosomal subunit protein uL30 (61 aa).

Belongs to the universal ribosomal protein uL30 family. As to quaternary structure, part of the 50S ribosomal subunit.

The polypeptide is Large ribosomal subunit protein uL30 (Corynebacterium glutamicum (strain ATCC 13032 / DSM 20300 / JCM 1318 / BCRC 11384 / CCUG 27702 / LMG 3730 / NBRC 12168 / NCIMB 10025 / NRRL B-2784 / 534)).